A 636-amino-acid chain; its full sequence is MVKFLVIFWFVVISFSHVSAQVCLERSGFFTPNSTYDLNRRVLLSSLPLNVTAIDGFYTTWIGEHPNRAYGLGMCVPGTDAHSCSDCIILANARLLQNCTNQTEAIVWRIDRTVCLVRYSNRSFYSSLGMEILRSDNYTRDFQANLTDLEITWEALMIRMIDQASYLYYAAGIRKLETSISRIYGFVQCSRDLSLQNCTKCLQQNVVEYRSCCRGRQGGIILRPSCFIRWELYPFLGLFDNIRPRQKDGKSISTGAIVAIIVVPILLLALGVGLWKRRKAYKTKTTKIADDITTSGSLQFEFKAIEAATCNFHNVNKLGHGGFGEVYKGTFPNGTEVAVKRLSKTSGQGEEEFKNEVFLVAKLQHRNLVKLLGYAVKGDEKILVYEFLPNKSLDHFLFDPVKKGQLDWTRRYNIINGITRGIVYLHQDSRLTIIHRDLKAGNILLDADMNPKIVDFGVARNFRVDQTEATTARVVGTIGYMPPEYVTNGQFSTKSDVYSFGVLILEIIGGKKNSSINETDGSISNLVTYVWRLWNNEPLLELVDAPMGENYDRNEVIRCIHIGLLCVQENPADRPTMSTVFHMLTNTSITLHVPQPPGFVFRVRFKPNPLADRLQRGPSTSMSFSCSVSVTCVSPR.

An N-terminal signal peptide occupies residues 1–20; sequence MVKFLVIFWFVVISFSHVSA. Gnk2-homologous domains are found at residues 21-124 and 130-235; these read QVCL…NRSF and MEIL…LYPF. The Extracellular portion of the chain corresponds to 21–254; the sequence is QVCLERSGFF…RQKDGKSIST (234 aa). Asparagine 33, asparagine 50, asparagine 98, asparagine 101, asparagine 121, asparagine 137, asparagine 145, and asparagine 197 each carry an N-linked (GlcNAc...) asparagine glycan. A helical transmembrane segment spans residues 255–275; that stretch reads GAIVAIIVVPILLLALGVGLW. At 276–636 the chain is on the cytoplasmic side; the sequence is KRRKAYKTKT…SVSVTCVSPR (361 aa). In terms of domain architecture, Protein kinase spans 312-585; that stretch reads FHNVNKLGHG…TMSTVFHMLT (274 aa). ATP-binding positions include 318-326 and lysine 340; that span reads LGHGGFGEV. Catalysis depends on aspartate 437, which acts as the Proton acceptor.

Belongs to the protein kinase superfamily. Ser/Thr protein kinase family. CRK subfamily.

The protein localises to the membrane. It carries out the reaction L-seryl-[protein] + ATP = O-phospho-L-seryl-[protein] + ADP + H(+). It catalyses the reaction L-threonyl-[protein] + ATP = O-phospho-L-threonyl-[protein] + ADP + H(+). The protein is Cysteine-rich receptor-like protein kinase 24 (CRK24) of Arabidopsis thaliana (Mouse-ear cress).